A 241-amino-acid chain; its full sequence is Tubulin-like protein alpha-4B (241 aa).

A compositionally biased stretch (basic and acidic residues) spans 1–10 (MRHQQTERQD). Residues 1-20 (MRHQQTERQDPSQPLSRQHG) form a disordered region. Aspartate 10 is a GTP binding site. Aspartate 10 provides a ligand contact to Mg(2+). Residues 11-20 (PSQPLSRQHG) show a composition bias toward polar residues. Residues serine 79, glycine 83, threonine 84, threonine 118, asparagine 145, and asparagine 167 each contribute to the GTP site. Glutamate 193 is an active-site residue.

It belongs to the tubulin family. The cofactor is Mg(2+). Post-translationally, some glutamate residues at the C-terminus are polyglutamylated, resulting in polyglutamate chains on the gamma-carboxyl group. Polyglutamylation plays a key role in microtubule severing by spastin (SPAST). SPAST preferentially recognizes and acts on microtubules decorated with short polyglutamate tails: severing activity by SPAST increases as the number of glutamates per tubulin rises from one to eight, but decreases beyond this glutamylation threshold. Glutamylation is also involved in cilia motility. Some glutamate residues at the C-terminus are monoglycylated but not polyglycylated due to the absence of functional TTLL10 in human. Monoglycylation is mainly limited to tubulin incorporated into cilia and flagella axonemes, which is required for their stability and maintenance. Flagella glycylation controls sperm motility. Both polyglutamylation and monoglycylation can coexist on the same protein on adjacent residues, and lowering glycylation levels increases polyglutamylation, and reciprocally.

The protein localises to the cytoplasm. It localises to the cytoskeleton. The catalysed reaction is GTP + H2O = GDP + phosphate + H(+). Its function is as follows. Tubulin is the major constituent of microtubules, a cylinder consisting of laterally associated linear protofilaments composed ofalpha- and beta-tubulin heterodimers. The polypeptide is Tubulin-like protein alpha-4B (TUBA4B) (Homo sapiens (Human)).